The chain runs to 773 residues: FT-interacting protein 3 (773 aa).

Over residues 1-16 (MQRPPPEDFSLKETRP) the composition is skewed to basic and acidic residues. A disordered region spans residues 1 to 24 (MQRPPPEDFSLKETRPHLGGGKLS). 3 consecutive C2 domains span residues 22-142 (KLSG…PQWY), 181-305 (VSGT…SRWY), and 345-471 (YSSD…THSY). Residues Asp-55, Asp-61, Asp-108, Asp-110, and Asp-115 each contribute to the Ca(2+) site. 3 helical membrane-spanning segments follow: residues 574-594 (IMGV…ICNW), 608-628 (IILV…LFLI), and 716-736 (LFVL…FQVV).

The protein belongs to the MCTP family. In terms of assembly, interacts with and regulates subcellular localization and trafficking of STM. Ca(2+) serves as cofactor. As to expression, accumulates in vascular tissues, leaf primordia and flowers. Highly expressed in roots meristems and in both vegetative and inflorescence shoot apical meristems (SAMs).

Its subcellular location is the endoplasmic reticulum membrane. The protein resides in the cytoplasm. It localises to the vesicle. The protein localises to the cell membrane. It is found in the endosome membrane. Its subcellular location is the golgi apparatus membrane. In terms of biological role, required for proliferation and differentiation of shoot stem cells in the shoot apical meristem (SAM), thus determining the appropriate balance between the maintenance of shoot stem cells and their differentiation into other aboveground plant parts via the control of subcellular localization and intercellular trafficking of STM in the shoot apex. Prevents intracellular trafficking of STM to the plasma membrane in cells in the peripheral shoot meristem region thus facilitating STM recycling to the nucleus to maintain stem cells. May function as a signaling molecule by regulating the trafficking of other regulators. This chain is FT-interacting protein 3, found in Arabidopsis thaliana (Mouse-ear cress).